The primary structure comprises 552 residues: MSDIAITICILALVAVIGLWIGHWKIRGVGLGIGGVLFGGIIVAHFMNQNGLKLDAHTLHFIQEFGLILFVYTIGIQVGPGFFASLLSAGLKLNGLATLIVVLGAVSVFVLYKVVNVDLDIILGIYSGAVTNTPSLGAGQQILTELGIENANSTMGMAYAMAYPFGICGILLSMWLIRLFFKIKVEEEEKQFQKASGQDKESLTTVNVKVTNPNLSGLRLIDIPGFDNKDVVCSRLKRQENISVPSADTIIAIDDVLHLVGEINALKKMKLVIGEEIDMPMTHLAGDLRSERIVVTNEKVLGKRIKHLGIHKKYGVVISRLNRAGVELVPTANTALQFGDVLHIVGRSDTIGNATSIIGNAQQKLQQVQMLPVFIGIGLGVLLGSIPFYIPGFPVALKLGLAGGPLVVALILARIGSVGKLYWFMPPSANLALREIGIVLFLAVVGLKSGGGFVDTLVHGQGLEWMGYGMFITFIPLMITGIIARLYMKLNYLSLCGLLAGSMTDPPALAFANAIKEDSGIAALSYATVYPLSMFLRIMSPQLLAILLWTAM.

The next 5 membrane-spanning stretches (helical) occupy residues 4–24 (IAIT…IGHW), 28–48 (GVGL…HFMN), 67–87 (LILF…ASLL), 95–115 (GLAT…YKVV), and 157–177 (MAYA…MWLI). RCK C-terminal domains lie at 190–275 (KQFQ…VIGE) and 277–360 (IDMP…IIGN). 6 helical membrane-spanning segments follow: residues 370-390 (MLPV…PFYI), 402-424 (AGGP…LYWF), 438-458 (IVLF…DTLV), 463-483 (LEWM…TGII), 495-515 (LCGL…ANAI), and 529-549 (VYPL…ILLW).

This sequence belongs to the AAE transporter (TC 2.A.81) family. YidE subfamily.

It is found in the cell membrane. In Histophilus somni (strain 129Pt) (Haemophilus somnus), this protein is Putative transport protein HS_1470.